The sequence spans 175 residues: Co-chaperone protein HscB homolog (175 aa).

One can recognise a J domain in the interval 7 to 79 (SHFDLFHLPA…LKRATYLLHL (73 aa)).

Belongs to the HscB family. Interacts with HscA and stimulates its ATPase activity.

In terms of biological role, co-chaperone involved in the maturation of iron-sulfur cluster-containing proteins. Seems to help targeting proteins to be folded toward HscA. The polypeptide is Co-chaperone protein HscB homolog (Burkholderia mallei (strain ATCC 23344)).